Consider the following 380-residue polypeptide: Cytochrome b (380 aa).

A run of 4 helical transmembrane segments spans residues 34-54 (FGSL…FLAM), 78-99 (WLLR…YFHI), 114-134 (WNIG…GYVL), and 179-199 (FFTF…IHLL). The heme b site is built by H84 and H98. A heme b-binding site is contributed by H197. Residue H202 participates in a ubiquinone binding. Transmembrane regions (helical) follow at residues 227–247 (FKDL…STFA), 289–309 (LGGV…PITH), 321–341 (TAKA…WIGG), and 348–368 (FISI…LIIP).

It belongs to the cytochrome b family. In terms of assembly, the cytochrome bc1 complex contains 3 respiratory subunits (MT-CYB, CYC1 and UQCRFS1), 2 core proteins (UQCRC1 and UQCRC2) and probably 6 low-molecular weight proteins. Requires heme b as cofactor.

It localises to the mitochondrion inner membrane. Functionally, component of the ubiquinol-cytochrome c reductase complex (complex III or cytochrome b-c1 complex) that is part of the mitochondrial respiratory chain. The b-c1 complex mediates electron transfer from ubiquinol to cytochrome c. Contributes to the generation of a proton gradient across the mitochondrial membrane that is then used for ATP synthesis. The polypeptide is Cytochrome b (mt-cyb) (Glandirana rugosa (Japanese wrinkled frog)).